We begin with the raw amino-acid sequence, 466 residues long: Putative proline/betaine transporter (466 aa).

12 helical membrane-spanning segments follow: residues 20–42 (VVATGIGNAMEWFDFGVYAYTTA), 63–83 (FAALAIAFLLRPIGGVVFGII), 91–111 (VVLTSTIILMAFSTLTIGLLP), 116–136 (IGLWAPILLLLARVLQGFSTG), 164–184 (IGTLSGYIAASIMIAVLTFFL), 191–211 (SFGWRIPFLLGLFLGLFGLYL), 247–267 (IFVCFVAVVFFNVTNYMVTAY), 285–305 (VLITCVMAIMIPLALMFGKLA), 313–332 (VFLIGTGGLTLFSIIAFMLL), 337–354 (FVVIVIGIFILGFFLSTY), 377–397 (VTFNISVSIFGGTTPLVATWL), and 405–425 (LAPAYYLTAISVIGFLVITFL).

Belongs to the major facilitator superfamily. Metabolite:H+ Symporter (MHS) family (TC 2.A.1.6) family.

The protein localises to the cell membrane. Its function is as follows. May be a proton symporter involved in the uptake of osmolytes such as proline and glycine betaine. The polypeptide is Putative proline/betaine transporter (proP) (Staphylococcus aureus (strain Mu3 / ATCC 700698)).